Here is a 129-residue protein sequence, read N- to C-terminus: Glycine cleavage system H protein (129 aa).

Positions 24 to 106 constitute a Lipoyl-binding domain; it reads TYTVGITEHA…YTDGWIFKIR (83 aa). Lys65 carries the N6-lipoyllysine modification.

Belongs to the GcvH family. In terms of assembly, the glycine cleavage system is composed of four proteins: P, T, L and H. (R)-lipoate serves as cofactor.

Its function is as follows. The glycine cleavage system catalyzes the degradation of glycine. The H protein shuttles the methylamine group of glycine from the P protein to the T protein. The sequence is that of Glycine cleavage system H protein from Enterobacter sp. (strain 638).